A 476-amino-acid chain; its full sequence is Doublesex and mab-3 related transcription factor 3 (476 aa).

The DM DNA-binding region spans 29–76 (CARCRNHGVLSWLKGHKRYCRFKDCTCEKCILIIERQRVMAAQVALRR). Disordered stretches follow at residues 89–130 (DSLR…RPAT) and 147–195 (GTLP…SKNC). Residues 102–121 (DAAATAATASQSSPASQASQ) show a composition bias toward low complexity. Over residues 176–185 (FSDKDTDQRS) the composition is skewed to basic and acidic residues. Residues 255-290 (RPPLEVLKKIFPNQKPTVLELILKGCGGDLVSAVEV) form the DMA domain. Residues 418-432 (NSTSVFRSSPVLSSR) are compositionally biased toward polar residues. The disordered stretch occupies residues 418-476 (NSTSVFRSSPVLSSRTTEDPRISIPDDGCPIVAKQSIYTEDDYDERSDSSDSRILNTSS).

It belongs to the DMRT family.

Its subcellular location is the nucleus. Its function is as follows. Probable transcription factor that plays a role in configuring the spinal circuits controlling stride in vertebrates. Involved in neuronal specification within a specific subdivision of spinal cord neurons and in the development of a coordinated locomotor network controlling limb movements. May regulate transcription during sexual development. The polypeptide is Doublesex and mab-3 related transcription factor 3 (Dmrt3) (Rattus norvegicus (Rat)).